We begin with the raw amino-acid sequence, 272 residues long: 2-C-methyl-D-erythritol 4-phosphate cytidylyltransferase (272 aa).

The protein belongs to the IspD/TarI cytidylyltransferase family. IspD subfamily.

It catalyses the reaction 2-C-methyl-D-erythritol 4-phosphate + CTP + H(+) = 4-CDP-2-C-methyl-D-erythritol + diphosphate. The protein operates within isoprenoid biosynthesis; isopentenyl diphosphate biosynthesis via DXP pathway; isopentenyl diphosphate from 1-deoxy-D-xylulose 5-phosphate: step 2/6. In terms of biological role, catalyzes the formation of 4-diphosphocytidyl-2-C-methyl-D-erythritol from CTP and 2-C-methyl-D-erythritol 4-phosphate (MEP). This is 2-C-methyl-D-erythritol 4-phosphate cytidylyltransferase from Xanthomonas oryzae pv. oryzae (strain PXO99A).